Here is a 360-residue protein sequence, read N- to C-terminus: Phospho-N-acetylmuramoyl-pentapeptide-transferase (360 aa).

Transmembrane regions (helical) follow at residues 26 to 46 (AILGLLTALVFSLWFGPKLIE), 74 to 94 (MGGLLILAAIFISVLLWGDLG), 97 to 117 (YVWVMLFVLGSFGLIGFIDDY), 134 to 154 (YILQSLAALLIAFFLYATAAN), 168 to 188 (VMPQLGAVFIVLAYFTIVGAS), 199 to 219 (GLAIMPTVMVAAAFALIAYLS), 236 to 256 (SGELVIVCTAIVGAGLGFLWF), 263 to 283 (VFMGDVGSLSLGAALGTIAVL), 288 to 308 (ILLVIMGGVFVMETLSVILQV), and 338 to 358 (VIVRFWIISIFLVLLGLATLK).

Belongs to the glycosyltransferase 4 family. MraY subfamily. The cofactor is Mg(2+).

It is found in the cell inner membrane. It carries out the reaction UDP-N-acetyl-alpha-D-muramoyl-L-alanyl-gamma-D-glutamyl-meso-2,6-diaminopimeloyl-D-alanyl-D-alanine + di-trans,octa-cis-undecaprenyl phosphate = di-trans,octa-cis-undecaprenyl diphospho-N-acetyl-alpha-D-muramoyl-L-alanyl-D-glutamyl-meso-2,6-diaminopimeloyl-D-alanyl-D-alanine + UMP. Its pathway is cell wall biogenesis; peptidoglycan biosynthesis. Its function is as follows. Catalyzes the initial step of the lipid cycle reactions in the biosynthesis of the cell wall peptidoglycan: transfers peptidoglycan precursor phospho-MurNAc-pentapeptide from UDP-MurNAc-pentapeptide onto the lipid carrier undecaprenyl phosphate, yielding undecaprenyl-pyrophosphoryl-MurNAc-pentapeptide, known as lipid I. The chain is Phospho-N-acetylmuramoyl-pentapeptide-transferase from Shewanella baltica (strain OS185).